The sequence spans 467 residues: Dimethylamine methyltransferase MtbB2 (467 aa).

Residue pyrrolysine 356 is a non-standard amino acid, pyrrolysine.

It belongs to the dimethylamine methyltransferase family.

It carries out the reaction Co(I)-[dimethylamine-specific corrinoid protein] + dimethylamine + H(+) = methyl-Co(III)-[dimethylamine-specific corrinoid protein] + methylamine. It functions in the pathway one-carbon metabolism; methanogenesis from dimethylamine. Functionally, catalyzes the transfer of a methyl group from dimethylamine to the corrinoid cofactor of MtbC. The protein is Dimethylamine methyltransferase MtbB2 (mtbB2) of Methanosarcina barkeri (strain Fusaro / DSM 804).